Here is a 677-residue protein sequence, read N- to C-terminus: Methionine--tRNA ligase (677 aa).

The short motif at 15–25 (PYANGSIHLGH) is the 'HIGH' region element. Residues Cys146, Cys149, Cys159, and Cys162 each contribute to the Zn(2+) site. The 'KMSKS' region signature appears at 333 to 337 (KMSKS). Lys336 is a binding site for ATP. Positions 575–677 (DFAKVDLRVA…AGAKPGHQVK (103 aa)) constitute a tRNA-binding domain.

This sequence belongs to the class-I aminoacyl-tRNA synthetase family. MetG type 1 subfamily. Homodimer. Zn(2+) serves as cofactor.

It is found in the cytoplasm. The enzyme catalyses tRNA(Met) + L-methionine + ATP = L-methionyl-tRNA(Met) + AMP + diphosphate. Is required not only for elongation of protein synthesis but also for the initiation of all mRNA translation through initiator tRNA(fMet) aminoacylation. In Escherichia coli O127:H6 (strain E2348/69 / EPEC), this protein is Methionine--tRNA ligase.